Here is a 205-residue protein sequence, read N- to C-terminus: N-(5'-phosphoribosyl)anthranilate isomerase (205 aa).

The protein belongs to the TrpF family.

It catalyses the reaction N-(5-phospho-beta-D-ribosyl)anthranilate = 1-(2-carboxyphenylamino)-1-deoxy-D-ribulose 5-phosphate. It participates in amino-acid biosynthesis; L-tryptophan biosynthesis; L-tryptophan from chorismate: step 3/5. This chain is N-(5'-phosphoribosyl)anthranilate isomerase, found in Acidiphilium cryptum (strain JF-5).